We begin with the raw amino-acid sequence, 225 residues long: Uridylate kinase (225 aa).

9 to 10 contributes to the ATP binding site; sequence GS. Residue glycine 43 participates in UMP binding. ATP contacts are provided by glycine 44 and arginine 48. UMP contacts are provided by residues aspartate 65 and 113-119; that span reads TEPAHST. 3 residues coordinate ATP: threonine 139, tyrosine 145, and aspartate 148.

This sequence belongs to the UMP kinase family. In terms of assembly, homohexamer.

It localises to the cytoplasm. It catalyses the reaction UMP + ATP = UDP + ADP. The protein operates within pyrimidine metabolism; CTP biosynthesis via de novo pathway; UDP from UMP (UMPK route): step 1/1. Its activity is regulated as follows. Inhibited by UTP. Catalyzes the reversible phosphorylation of UMP to UDP. This is Uridylate kinase from Methanobrevibacter smithii (strain ATCC 35061 / DSM 861 / OCM 144 / PS).